A 211-amino-acid polypeptide reads, in one-letter code: Dephospho-CoA kinase (211 aa).

The DPCK domain occupies 3–206 (VIGLTGGIAT…GGRGRRLPNA (204 aa)). An ATP-binding site is contributed by 11–16 (ATGKST).

Belongs to the CoaE family.

The protein resides in the cytoplasm. The enzyme catalyses 3'-dephospho-CoA + ATP = ADP + CoA + H(+). Its pathway is cofactor biosynthesis; coenzyme A biosynthesis; CoA from (R)-pantothenate: step 5/5. Catalyzes the phosphorylation of the 3'-hydroxyl group of dephosphocoenzyme A to form coenzyme A. The polypeptide is Dephospho-CoA kinase (Anaeromyxobacter dehalogenans (strain 2CP-C)).